A 232-amino-acid polypeptide reads, in one-letter code: Ribonuclease 3 (232 aa).

In terms of domain architecture, RNase III spans 9-131 (INLLQKKLGY…IIGGIFLDSN (123 aa)). Residue Glu-44 participates in Mg(2+) binding. Asp-48 is an active-site residue. Residues Asp-117 and Glu-120 each coordinate Mg(2+). Glu-120 is an active-site residue. The 71-residue stretch at 158–228 (DPKTRLQEYL…AENALKFLIE (71 aa)) folds into the DRBM domain.

It belongs to the ribonuclease III family. As to quaternary structure, homodimer. Requires Mg(2+) as cofactor.

It localises to the cytoplasm. The catalysed reaction is Endonucleolytic cleavage to 5'-phosphomonoester.. Digests double-stranded RNA. Involved in the processing of primary rRNA transcript to yield the immediate precursors to the large and small rRNAs (23S and 16S). Processes some mRNAs, and tRNAs when they are encoded in the rRNA operon. Processes pre-crRNA and tracrRNA of type II CRISPR loci if present in the organism. The chain is Ribonuclease 3 from Blochmanniella floridana.